The following is a 321-amino-acid chain: Nod factor export ATP-binding protein I (321 aa).

The ABC transporter domain maps to 17-247 (LSVEGLRKRY…EIGCDVVEVY (231 aa)). 49–56 (GPNGAGKT) lines the ATP pocket.

Belongs to the ABC transporter superfamily. Lipooligosaccharide exporter (TC 3.A.1.102) family. The complex is composed of two ATP-binding proteins (NodI) and two transmembrane proteins (NodJ).

Its subcellular location is the cell inner membrane. Its function is as follows. Part of the ABC transporter complex NodIJ involved in the export of the nodulation factors (Nod factors), the bacterial signal molecules that induce symbiosis and subsequent nodulation induction. Nod factors are LCO (lipo-chitin oligosaccharide), a modified beta-1,4-linked N-acetylglucosamine oligosaccharide. This subunit is responsible for energy coupling to the transport system. The protein is Nod factor export ATP-binding protein I of Ralstonia nicotianae (strain ATCC BAA-1114 / GMI1000) (Ralstonia solanacearum).